A 282-amino-acid polypeptide reads, in one-letter code: Acetyl-coenzyme A carboxylase carboxyl transferase subunit beta (282 aa).

The 260-residue stretch at 23 to 282 (IWTKCGQCDA…MLSKLHHQQA (260 aa)) folds into the CoA carboxyltransferase N-terminal domain. The Zn(2+) site is built by cysteine 27, cysteine 30, cysteine 46, and cysteine 49. The segment at 27–49 (CGQCDAVLYKTELEKQLGVCPKC) adopts a C4-type zinc-finger fold.

Belongs to the AccD/PCCB family. As to quaternary structure, acetyl-CoA carboxylase is a heterohexamer composed of biotin carboxyl carrier protein (AccB), biotin carboxylase (AccC) and two subunits each of ACCase subunit alpha (AccA) and ACCase subunit beta (AccD). It depends on Zn(2+) as a cofactor.

The protein localises to the cytoplasm. The enzyme catalyses N(6)-carboxybiotinyl-L-lysyl-[protein] + acetyl-CoA = N(6)-biotinyl-L-lysyl-[protein] + malonyl-CoA. The protein operates within lipid metabolism; malonyl-CoA biosynthesis; malonyl-CoA from acetyl-CoA: step 1/1. Functionally, component of the acetyl coenzyme A carboxylase (ACC) complex. Biotin carboxylase (BC) catalyzes the carboxylation of biotin on its carrier protein (BCCP) and then the CO(2) group is transferred by the transcarboxylase to acetyl-CoA to form malonyl-CoA. The polypeptide is Acetyl-coenzyme A carboxylase carboxyl transferase subunit beta (Pseudoalteromonas atlantica (strain T6c / ATCC BAA-1087)).